The primary structure comprises 514 residues: 2,3-bisphosphoglycerate-independent phosphoglycerate mutase (514 aa).

Residues D14 and S64 each contribute to the Mn(2+) site. S64 acts as the Phosphoserine intermediate in catalysis. Substrate contacts are provided by residues H125, R155–D156, R187, R193, R263–R266, and K336. Mn(2+)-binding residues include D403, H407, D444, H445, and H463.

The protein belongs to the BPG-independent phosphoglycerate mutase family. Monomer. Mn(2+) serves as cofactor.

It carries out the reaction (2R)-2-phosphoglycerate = (2R)-3-phosphoglycerate. The protein operates within carbohydrate degradation; glycolysis; pyruvate from D-glyceraldehyde 3-phosphate: step 3/5. In terms of biological role, catalyzes the interconversion of 2-phosphoglycerate and 3-phosphoglycerate. This chain is 2,3-bisphosphoglycerate-independent phosphoglycerate mutase, found in Shewanella oneidensis (strain ATCC 700550 / JCM 31522 / CIP 106686 / LMG 19005 / NCIMB 14063 / MR-1).